Consider the following 532-residue polypeptide: Putative 57 kDa heat shock protein (532 aa).

2 sHSP domains span residues 25–134 (VNGP…CKIT) and 439–532 (SVLE…IPSN).

It belongs to the small heat shock protein (HSP20) family.

The polypeptide is Putative 57 kDa heat shock protein (Arabidopsis thaliana (Mouse-ear cress)).